The sequence spans 183 residues: Protein AC4 (183 aa).

This sequence belongs to the geminiviridae protein AC4/C4 family.

Pathogenicity determinant. May act as a suppressor of RNA-mediated gene silencing, also known as post-transcriptional gene silencing (PTGS), a mechanism of plant viral defense that limits the accumulation of viral RNAs. This African cassava mosaic virus (isolate West Kenyan 844) (ACMV) protein is Protein AC4.